The following is a 520-amino-acid chain: Cilia- and flagella-associated protein 157 (520 aa).

Residues 1–22 (MAPKKSVSKAGKELEVKKKGGK) are disordered. The segment covering 10–22 (AGKELEVKKKGGK) has biased composition (basic and acidic residues). 2 coiled-coil regions span residues 33–189 (LAKE…LEKK) and 236–372 (LQMA…QATS). The segment at 416-453 (PQKAACPHQESQSHGPPKESRPSIQLPRTGSLLPQLSD) is disordered. The span at 437 to 453 (PSIQLPRTGSLLPQLSD) shows a compositional bias: polar residues.

It belongs to the CFAP157 family. Interacts with TUBB and TUBA4A. Interacts with CEP350.

Its subcellular location is the cytoplasm. The protein resides in the cytoskeleton. It localises to the cilium basal body. Functionally, specifically required during spermatogenesis for flagellum morphogenesis and sperm motility. May be required to suppress the formation of supernumerary axonemes and ensure a correct ultrastructure. This chain is Cilia- and flagella-associated protein 157, found in Homo sapiens (Human).